A 351-amino-acid polypeptide reads, in one-letter code: Thiamine-phosphate synthase (351 aa).

Residues 1–128 (MLNSNTKDHE…SKIASEIRYE (128 aa)) form a unknown region. The tract at residues 129-351 (IYTVEIDLLS…MILKELSHEN (223 aa)) is thiamine-phosphate synthase. 4-amino-2-methyl-5-(diphosphooxymethyl)pyrimidine contacts are provided by residues 180-184 (QHRFK) and asparagine 212. Aspartate 213 and aspartate 232 together coordinate Mg(2+). Serine 251 is a binding site for 4-amino-2-methyl-5-(diphosphooxymethyl)pyrimidine. Position 277–279 (277–279 (TTT)) interacts with 2-[(2R,5Z)-2-carboxy-4-methylthiazol-5(2H)-ylidene]ethyl phosphate. 4-amino-2-methyl-5-(diphosphooxymethyl)pyrimidine is bound at residue lysine 280. Residue glycine 307 participates in 2-[(2R,5Z)-2-carboxy-4-methylthiazol-5(2H)-ylidene]ethyl phosphate binding.

It belongs to the thiamine-phosphate synthase family. Requires Mg(2+) as cofactor.

The catalysed reaction is 2-[(2R,5Z)-2-carboxy-4-methylthiazol-5(2H)-ylidene]ethyl phosphate + 4-amino-2-methyl-5-(diphosphooxymethyl)pyrimidine + 2 H(+) = thiamine phosphate + CO2 + diphosphate. It catalyses the reaction 2-(2-carboxy-4-methylthiazol-5-yl)ethyl phosphate + 4-amino-2-methyl-5-(diphosphooxymethyl)pyrimidine + 2 H(+) = thiamine phosphate + CO2 + diphosphate. The enzyme catalyses 4-methyl-5-(2-phosphooxyethyl)-thiazole + 4-amino-2-methyl-5-(diphosphooxymethyl)pyrimidine + H(+) = thiamine phosphate + diphosphate. It participates in cofactor biosynthesis; thiamine diphosphate biosynthesis; thiamine phosphate from 4-amino-2-methyl-5-diphosphomethylpyrimidine and 4-methyl-5-(2-phosphoethyl)-thiazole: step 1/1. In terms of biological role, condenses 4-methyl-5-(beta-hydroxyethyl)thiazole monophosphate (THZ-P) and 2-methyl-4-amino-5-hydroxymethyl pyrimidine pyrophosphate (HMP-PP) to form thiamine monophosphate (TMP). In Prochlorococcus marinus (strain AS9601), this protein is Thiamine-phosphate synthase.